The sequence spans 449 residues: SUPPRESSOR OF GAMMA RESPONSE 1 (449 aa).

An NAC domain is found at 58 to 211 (LPRGVKFDPS…DYVVSKIFYQ (154 aa)). The DNA-binding element occupies 167-217 (RGCKKIMVLYGGKAVKTNWVMHQYHLGIEEDEKEGDYVVSKIFYQQPQQLV). The span at 324–336 (DDKEEQEKDRDNE) shows a compositional bias: basic and acidic residues. The tract at residues 324-348 (DDKEEQEKDRDNENQGEEDPTWFDS) is disordered.

Post-translationally, phosphorylated in a DNA stress-independent manner. Hyperphosphorylated on SQ motifs upon double-strand breaks, H(2)O(2) or zeocin treatments. Hyperphosphorylation is required for SOG1 function, and unlike constitutive phosphorylation, is ATM dependent. Expressed in shoot and root apical meristems, in lateral root primordia, in the vasculature of young leaves and in the root stele.

The protein localises to the nucleus. In terms of biological role, transcription factor regulating the transcriptional activation response to gamma irradiation. Required for stem-cell death induced by UVB or by gamma irradiation. Not required for ATM activation, but participates in pathways governed by both ATM and ATR sensor kinases. Involved in DNA damage response (DDR) system that regulates cell cycle arrest. Functional homolog of animal p53. Regulates SMR5 and SMR7 transcription. Regulates DNA repair and cytokinin signaling separately and plays a key role in controlling lateral root formation under genotoxic stress. The protein is SUPPRESSOR OF GAMMA RESPONSE 1 of Arabidopsis thaliana (Mouse-ear cress).